We begin with the raw amino-acid sequence, 383 residues long: MKRKVLALVIPALLAAGAAHAAEIYNKDGNKLDLYGKVDGLHYFSDDSSKDGDQTYMRVGFKGETQINDQLTGYGQWEYNVQANTTEGEGANSWTRLAFAGLKFGDYGSFDYGRNYGVLYDVEGWTDMLPEFGGDSYTYADNYMTGRANGVATYRNTDFFGLVDGLNFALQYQGKNESQSADDVNIGTNNRNNGDDIRYDNGDGFGISTTYDIGMGFSAGAAYTTSDRTNEQVNAGGTIAGGDKADAWTAGLKYDANNIYLATMYSETRNMTPYGKTDKGYDGGVANKTQNFEVTAQYQFDFGLRPAVSFLMSKGKDLTYNNVNGDDKDLVKYADVGATYYFNKNFSTYVDYKINLLDDDDPFYKDAGISTDDIVALGMVYQF.

An N-terminal signal peptide occupies residues 1–21 (MKRKVLALVIPALLAAGAAHA).

This sequence belongs to the Gram-negative porin family. In terms of assembly, homotrimer.

Its subcellular location is the cell outer membrane. Its function is as follows. Forms pores that allow passive diffusion of small molecules across the outer membrane. The polypeptide is Outer membrane protein S2 (ompS2) (Salmonella typhi).